Reading from the N-terminus, the 135-residue chain is Large ribosomal subunit protein uL16c (135 aa).

M1 bears the N-methylmethionine mark.

As to quaternary structure, component of the chloroplast large ribosomal subunit (LSU). Mature 70S chloroplast ribosomes of higher plants consist of a small (30S) and a large (50S) subunit. The 30S small subunit contains 1 molecule of ribosomal RNA (16S rRNA) and 24 different proteins. The 50S large subunit contains 3 rRNA molecules (23S, 5S and 4.5S rRNA) and 33 different proteins. Post-translationally, partially alpha-N-monomethylated at Met-1 (10%), whereas 90% of it is blocked to Edman degradation, probably by trimethylation.

Its subcellular location is the plastid. The protein localises to the chloroplast. Component of the chloroplast ribosome (chloro-ribosome), a dedicated translation machinery responsible for the synthesis of chloroplast genome-encoded proteins, including proteins of the transcription and translation machinery and components of the photosynthetic apparatus. This is Large ribosomal subunit protein uL16c from Spinacia oleracea (Spinach).